A 168-amino-acid chain; its full sequence is Transcription antitermination protein NusB (168 aa).

It belongs to the NusB family.

Its function is as follows. Involved in transcription antitermination. Required for transcription of ribosomal RNA (rRNA) genes. Binds specifically to the boxA antiterminator sequence of the ribosomal RNA (rrn) operons. The protein is Transcription antitermination protein NusB of Chlamydia trachomatis serovar A (strain ATCC VR-571B / DSM 19440 / HAR-13).